Consider the following 662-residue polypeptide: MEPLVTWVVPLLFLFLLSRQGAACRTSECCFQDPPYPDADSGSASGPRDLRCYRISSDRYECSWQYEGPTAGVSHFLRCCLSSGRCCYFAAGSATRLQFSDQAGVSVLYTVTLWVESWARNQTEKSPEVTLQLYNSVKYEPPLGDIKVSKLAGQLRMEWETPDNQVGAEVQFRHRTPSSPWKLGDCGPQDDDTESCLCPLEMNVAQEFQLRRRQLGSQGSSWSKWSSPVCVPPENPPQPQVRFSVEQLGQDGRRRLTLKEQPTQLELPEGCQGLAPGTEVTYRLQLHMLSCPCKAKATRTLHLGKMPYLSGAAYNVAVISSNQFGPGLNQTWHIPADTHTEPVALNISVGTNGTTMYWPARAQSMTYCIEWQPVGQDGGLATCSLTAPQDPDPAGMATYSWSRESGAMGQEKCYYITIFASAHPEKLTLWSTVLSTYHFGGNASAAGTPHHVSVKNHSLDSVSVDWAPSLLSTCPGVLKEYVVRCRDEDSKQVSEHPVQPTETQVTLSGLRAGVAYTVQVRADTAWLRGVWSQPQRFSIEVQVSDWLIFFASLGSFLSILLVGVLGYLGLNRAARHLCPPLPTPCASSAIEFPGGKETWQWINPVDFQEEASLQEALVVEMSWDKGERTEPLEKTELPEGAPELALDTELSLEDGDRCKAKM.

The N-terminal stretch at 1–23 is a signal peptide; sequence MEPLVTWVVPLLFLFLLSRQGAA. Topologically, residues 24–545 are extracellular; sequence CRTSECCFQD…RFSIEVQVSD (522 aa). Fibronectin type-III domains lie at 46–136, 142–234, 237–337, 338–444, and 448–542; these read GPRD…LYNS, PLGD…VPPE, PQPQ…IPAD, THTE…GNAS, and TPHH…IEVQ. Cysteines 52 and 62 form a disulfide. N-linked (GlcNAc...) asparagine glycosylation occurs at Asn-121. A WSXWS motif motif is present at residues 222 to 226; the sequence is WSKWS. N-linked (GlcNAc...) asparagine glycans are attached at residues Asn-329, Asn-346, Asn-352, Asn-442, and Asn-456. Residues 546-570 traverse the membrane as a helical segment; that stretch reads WLIFFASLGSFLSILLVGVLGYLGL. Topologically, residues 571–662 are cytoplasmic; the sequence is NRAARHLCPP…EDGDRCKAKM (92 aa). Residues 577 to 585 carry the Box 1 motif motif; sequence LCPPLPTPC. Positions 626 to 637 are enriched in basic and acidic residues; it reads GERTEPLEKTEL. A disordered region spans residues 626–648; sequence GERTEPLEKTELPEGAPELALDT.

This sequence belongs to the type I cytokine receptor family. Type 2 subfamily. As to quaternary structure, dimer or oligomer; disulfide-linked. Interacts with IL12RB2 to form the high affinity IL12 receptor. Heterodimer with IL23R; in presence of IL23. The heterodimer forms the IL23 receptor.

The protein localises to the membrane. Its function is as follows. Functions as an interleukin receptor which binds interleukin-12 with low affinity and is involved in IL12 transduction. Associated with IL12RB2 it forms a functional, high affinity receptor for IL12. Also associates with IL23R to form the interleukin-23 receptor which functions in IL23 signal transduction probably through activation of the Jak-Stat signaling cascade. This chain is Interleukin-12 receptor subunit beta-1 (IL12RB1), found in Homo sapiens (Human).